We begin with the raw amino-acid sequence, 169 residues long: T-cell receptor gamma chain C region DFL12 (169 aa).

Positions proline 1–tyrosine 136 are c region. The chain crosses the membrane as a helical span at residues threonine 137 to leucine 157. The Cytoplasmic segment spans residues arginine 158–serine 169.

The protein resides in the membrane. This is T-cell receptor gamma chain C region DFL12 from Mus musculus (Mouse).